The chain runs to 324 residues: Protoheme IX farnesyltransferase (324 aa).

A run of 9 helical transmembrane segments spans residues 31–51, 56–76, 105–125, 126–146, 153–173, 181–201, 214–234, 238–258, and 285–305; these read LILL…SGQV, FLTT…INCI, VFAA…ANLL, SACL…YWLK, IVIG…AVTG, VLFA…AMMI, PVVN…LLLL, LLLV…AIVL, and FSIL…LPWT.

This sequence belongs to the UbiA prenyltransferase family. Protoheme IX farnesyltransferase subfamily.

The protein resides in the cell inner membrane. It catalyses the reaction heme b + (2E,6E)-farnesyl diphosphate + H2O = Fe(II)-heme o + diphosphate. It participates in porphyrin-containing compound metabolism; heme O biosynthesis; heme O from protoheme: step 1/1. Converts heme B (protoheme IX) to heme O by substitution of the vinyl group on carbon 2 of heme B porphyrin ring with a hydroxyethyl farnesyl side group. This Acaryochloris marina (strain MBIC 11017) protein is Protoheme IX farnesyltransferase.